We begin with the raw amino-acid sequence, 201 residues long: Large ribosomal subunit protein bL25 (201 aa).

The disordered stretch occupies residues 179–201 (VSITAPRVEAEKTEEEEPESTEE). The span at 190–201 (KTEEEEPESTEE) shows a compositional bias: acidic residues.

Belongs to the bacterial ribosomal protein bL25 family. CTC subfamily. Part of the 50S ribosomal subunit; part of the 5S rRNA/L5/L18/L25 subcomplex. Contacts the 5S rRNA. Binds to the 5S rRNA independently of L5 and L18.

Its function is as follows. This is one of the proteins that binds to the 5S RNA in the ribosome where it forms part of the central protuberance. This chain is Large ribosomal subunit protein bL25, found in Prosthecochloris aestuarii (strain DSM 271 / SK 413).